Consider the following 542-residue polypeptide: 3-(3-hydroxy-phenyl)propionate/3-hydroxycinnamic acid hydroxylase (542 aa).

FAD contacts are provided by residues 10-39 (SVAI…VVER) and 278-288 (FVAGRVALIGD).

The protein belongs to the PheA/TfdB FAD monooxygenase family. FAD serves as cofactor.

It carries out the reaction 3-(3-hydroxyphenyl)propanoate + NADH + O2 + H(+) = 3-(2,3-dihydroxyphenyl)propanoate + NAD(+) + H2O. The enzyme catalyses (2E)-3-(3-hydroxyphenyl)prop-2-enoate + NADH + O2 + H(+) = (2E)-3-(2,3-dihydroxyphenyl)prop-2-enoate + NAD(+) + H2O. It participates in aromatic compound metabolism; 3-phenylpropanoate degradation. In terms of biological role, catalyzes the insertion of one atom of molecular oxygen into position 2 of the phenyl ring of 3-(3-hydroxyphenyl)propionate (3-HPP) and hydroxycinnamic acid (3HCI). The sequence is that of 3-(3-hydroxy-phenyl)propionate/3-hydroxycinnamic acid hydroxylase from Burkholderia cenocepacia (strain HI2424).